A 317-amino-acid polypeptide reads, in one-letter code: Probable cell division protein WhiA (317 aa).

The segment at residues 275 to 308 is a DNA-binding region (H-T-H motif); the sequence is SLKELGEMLVPKVGKSGVNHRMRKIDELAEKLEE.

This sequence belongs to the WhiA family.

Involved in cell division and chromosome segregation. The sequence is that of Probable cell division protein WhiA from Desulfitobacterium hafniense (strain Y51).